The following is a 158-amino-acid chain: Endoribonuclease YbeY (158 aa).

Zn(2+) is bound by residues histidine 124, histidine 128, and histidine 134.

This sequence belongs to the endoribonuclease YbeY family. Requires Zn(2+) as cofactor.

The protein resides in the cytoplasm. Single strand-specific metallo-endoribonuclease involved in late-stage 70S ribosome quality control and in maturation of the 3' terminus of the 16S rRNA. This chain is Endoribonuclease YbeY, found in Caldanaerobacter subterraneus subsp. tengcongensis (strain DSM 15242 / JCM 11007 / NBRC 100824 / MB4) (Thermoanaerobacter tengcongensis).